A 62-amino-acid chain; its full sequence is Large ribosomal subunit protein uL15 (62 aa).

Belongs to the universal ribosomal protein uL15 family.

The chain is Large ribosomal subunit protein uL15 (RPL28) from Candida albicans (Yeast).